The primary structure comprises 368 residues: E3 ubiquitin-protein ligase makorin (368 aa).

C3H1-type zinc fingers lie at residues 2-29 and 30-57; these read STKR…HDWN and DQPN…HVKV. The disordered stretch occupies residues 58–81; sequence SRNPTVAPPPSSSTTTRASSSLQP. Low complexity predominate over residues 69 to 78; the sequence is SSTTTRASSS. The C3H1-type 3 zinc-finger motif lies at 147-174; that stretch reads PADLPICSFAAGGNCPYGEECPQMHGDL. Residues 175-202 form a makorin-type Cys-His region; that stretch reads CTTCGKMCLHPYRPDEREEHTKLCEKNH. The segment at 216–274 adopts an RING-type zinc-finger fold; it reads CSVCLDRVLSKPTAAERKFGLLSECDHPFCISCIRNWRNNSPTSGMDVNSALRACPICR. The segment at 303 to 332 adopts a C3H1-type 4 zinc-finger fold; sequence KLKSIDCKYFDFGTGTCPFGSSCFYKHAYR.

In terms of tissue distribution, expressed in primary roots and leaves. Detected in vascular bundle tissues.

It catalyses the reaction S-ubiquitinyl-[E2 ubiquitin-conjugating enzyme]-L-cysteine + [acceptor protein]-L-lysine = [E2 ubiquitin-conjugating enzyme]-L-cysteine + N(6)-ubiquitinyl-[acceptor protein]-L-lysine.. It functions in the pathway protein modification; protein ubiquitination. In terms of biological role, E3 ubiquitin ligase catalyzing the covalent attachment of ubiquitin moieties onto substrate proteins. This chain is E3 ubiquitin-protein ligase makorin (MKRN), found in Oryza sativa subsp. japonica (Rice).